Reading from the N-terminus, the 281-residue chain is 4-diphosphocytidyl-2-C-methyl-D-erythritol kinase (281 aa).

Lys-11 is a catalytic residue. Leu-92 to Ala-102 is an ATP binding site. Residue Asp-132 is part of the active site.

The protein belongs to the GHMP kinase family. IspE subfamily.

It carries out the reaction 4-CDP-2-C-methyl-D-erythritol + ATP = 4-CDP-2-C-methyl-D-erythritol 2-phosphate + ADP + H(+). It participates in isoprenoid biosynthesis; isopentenyl diphosphate biosynthesis via DXP pathway; isopentenyl diphosphate from 1-deoxy-D-xylulose 5-phosphate: step 3/6. Its function is as follows. Catalyzes the phosphorylation of the position 2 hydroxy group of 4-diphosphocytidyl-2C-methyl-D-erythritol. This is 4-diphosphocytidyl-2-C-methyl-D-erythritol kinase from Ehrlichia ruminantium (strain Welgevonden).